Reading from the N-terminus, the 1001-residue chain is Chloride channel protein clh-3 (1001 aa).

Residues 1–48 (MGIGTKILSKIEKNKTSDGLTIPLTPTTQKQSSSWCSFESIKTFFRTV) lie on the Cytoplasmic side of the membrane. Helical transmembrane passes span 49–85 (IRDW…RLFD) and 91–117 (HFTL…AHYI). A Selectivity filter part_1 motif is present at residues 123–127 (GSGIP). Ser-124 serves as a coordination point for chloride. The segment at residues 126-133 (IPEMKTIL) is an intramembrane region (helical). The next 2 membrane-spanning stretches (helical) occupy residues 142 to 160 (LSVR…SLGS) and 167 to 185 (EGPF…TRLV). A Selectivity filter part_2 motif is present at residues 165–169 (GKEGP). Intramembrane regions (helical) lie at residues 202 to 214 (MLAA…VACT) and 218 to 226 (PIGGVLFSI). A run of 5 helical transmembrane segments spans residues 238-258 (YWRG…LRMF), 285-313 (LPIF…VLFL), 322-341 (IFQK…ISSL), 405-425 (YSPF…AILA), and 433-456 (GIFM…VFSL). The Selectivity filter part_3 signature appears at 433–437 (GIFMP). Residues Ile-434 and Phe-435 each contribute to the chloride site. Residues 473-487 (GVYAVVGAAAFCGAV) constitute an intramembrane region (helical). An intramembrane region (note=Loop between two helices) is located at residues 488 to 489 (TH). An intramembrane region (helical) is located at residues 490-501 (TVSVAVIVFELT). The note=Loop between two helices intramembrane region spans 502-506 (GQLCH). Residues 507-524 (LLPVMIAVLIANAVASYL) form a helical membrane-spanning segment. The Cytoplasmic segment spans residues 525–1001 (QPSIYDSIIR…LPDDVHDEKF (477 aa)). Position 529 (Tyr-529) interacts with chloride. The CBS 1 domain occupies 560–619 (MISPLVYIAKDSTVGDIKRALETKTRIRAFPLVENMESLALVGSVSRSQLQRYVDSQIGT). The stretch at 625-657 (EATRRIKQRLEDEESERKRREESKSDDTEDSLE) forms a coiled coil. Positions 634 to 650 (LEDEESERKRREESKSD) are enriched in basic and acidic residues. The tract at residues 634-662 (LEDEESERKRREESKSDDTEDSLETTGAG) is disordered. Phosphoserine; by gck-3 is present on residues Ser-742 and Ser-747. In terms of domain architecture, CBS 2 spans 788–845 (IDSTPFQLSEYTSLFKAHSLFSLLGLNRAYVTKKGQLIGVVALKELRLAIEYLQSGKV).

It belongs to the chloride channel (TC 2.A.49) family. In terms of assembly, isoform a interacts (via RFLI motif) with gck-3 (via C-terminus). Phosphorylated by gck-3; phosphorylation at both Ser-742 and Ser-747 is required to inhibit channel activity. Dephosphorylated by gsp-1/2 during cell swelling and oocyte meiotic maturation, which results in channel activation. As to expression, expressed in excretory cell, 4 anterior epithelial cells of the intestine, hermaphrodite-specific neurons and enteric muscles. Expressed also in vulva and uterus. Isoform a is expressed in oocytes (at protein level).

The protein resides in the cell membrane. Voltage-gated chloride channel. Insensitive to depolarizing conditioning voltages, requires low voltages for activation, insensitive to chloride levels and has a mild sensitivity to low pH. Channel gating properties are conferred by the cytoplasmic C-terminus. Plays a role in egg laying by modulating hermaphrodite-specific neurons (HSN) excitability and the ovulatory contractions of gap-junction-coupled gonadal sheath cells. When active, may prevent tubular formation of the excretory canals. Activated during oocyte meiotic maturation and by membrane hyperpolarization and cell swelling. Inhibited by Zn(2+) and to a lesser extent by Cd(2+). In terms of biological role, voltage-gated chloride channel. Sensitive to depolarizing conditioning voltages, requires stronger voltages for activation and activation is slower, is inhibited by low concentrations of chloride and is activated by low pH. Channel gating properties are conferred by the cytoplasmic C-terminus. In Caenorhabditis elegans, this protein is Chloride channel protein clh-3.